Here is a 214-residue protein sequence, read N- to C-terminus: tRNA (guanine-N(7)-)-methyltransferase (214 aa).

S-adenosyl-L-methionine-binding residues include Glu44, Glu69, Asp96, and Asp118. The active site involves Asp118. Substrate-binding positions include Lys122, Asp154, and 191-194 (TEYE).

This sequence belongs to the class I-like SAM-binding methyltransferase superfamily. TrmB family.

The catalysed reaction is guanosine(46) in tRNA + S-adenosyl-L-methionine = N(7)-methylguanosine(46) in tRNA + S-adenosyl-L-homocysteine. The protein operates within tRNA modification; N(7)-methylguanine-tRNA biosynthesis. In terms of biological role, catalyzes the formation of N(7)-methylguanine at position 46 (m7G46) in tRNA. This chain is tRNA (guanine-N(7)-)-methyltransferase, found in Listeria monocytogenes serotype 4b (strain F2365).